Here is a 270-residue protein sequence, read N- to C-terminus: Phosphatidylglycerol--prolipoprotein diacylglyceryl transferase (270 aa).

4 helical membrane-spanning segments follow: residues phenylalanine 19 to alanine 39, leucine 56 to glutamate 76, glutamine 92 to alanine 112, and glycine 116 to isoleucine 136. Arginine 138 lines the a 1,2-diacyl-sn-glycero-3-phospho-(1'-sn-glycerol) pocket. 3 helical membrane-spanning segments follow: residues histidine 178–leucine 198, glycine 206–leucine 226, and leucine 236–valine 256.

It belongs to the Lgt family.

It localises to the cell membrane. The catalysed reaction is L-cysteinyl-[prolipoprotein] + a 1,2-diacyl-sn-glycero-3-phospho-(1'-sn-glycerol) = an S-1,2-diacyl-sn-glyceryl-L-cysteinyl-[prolipoprotein] + sn-glycerol 1-phosphate + H(+). The protein operates within protein modification; lipoprotein biosynthesis (diacylglyceryl transfer). Functionally, catalyzes the transfer of the diacylglyceryl group from phosphatidylglycerol to the sulfhydryl group of the N-terminal cysteine of a prolipoprotein, the first step in the formation of mature lipoproteins. The polypeptide is Phosphatidylglycerol--prolipoprotein diacylglyceryl transferase (Bacillus cereus (strain G9842)).